The sequence spans 351 residues: GDP-mannose 4,6-dehydratase (351 aa).

NADP(+)-binding positions include 11 to 16, 66 to 67, 88 to 92, and tyrosine 103; these read GVTGQD, DM, and LAAQS. Residue threonine 135 is part of the active site. Catalysis depends on nucleophile residues glutamate 137 and tyrosine 159. NADP(+) contacts are provided by lysine 163, histidine 189, and arginine 194.

Belongs to the NAD(P)-dependent epimerase/dehydratase family. GDP-mannose 4,6-dehydratase subfamily. The cofactor is NADP(+).

It carries out the reaction GDP-alpha-D-mannose = GDP-4-dehydro-alpha-D-rhamnose + H2O. It functions in the pathway nucleotide-sugar biosynthesis; GDP-L-fucose biosynthesis via de novo pathway; GDP-L-fucose from GDP-alpha-D-mannose: step 1/2. Functionally, catalyzes the conversion of GDP-D-mannose to GDP-4-dehydro-6-deoxy-D-mannose. The chain is GDP-mannose 4,6-dehydratase from Sinorhizobium fredii (strain HH103).